We begin with the raw amino-acid sequence, 151 residues long: Ribosome maturation factor RimP (151 aa).

It belongs to the RimP family.

Its subcellular location is the cytoplasm. Functionally, required for maturation of 30S ribosomal subunits. In Haemophilus influenzae (strain PittEE), this protein is Ribosome maturation factor RimP.